We begin with the raw amino-acid sequence, 498 residues long: Fascin-3 (498 aa).

This sequence belongs to the fascin family. Expressed in testis.

The protein localises to the cytoplasm. Its subcellular location is the cytoskeleton. In terms of biological role, acts as an actin bundling protein. The chain is Fascin-3 (FSCN3) from Homo sapiens (Human).